The chain runs to 110 residues: Large ribosomal subunit protein uL22 (110 aa).

It belongs to the universal ribosomal protein uL22 family. As to quaternary structure, part of the 50S ribosomal subunit.

This protein binds specifically to 23S rRNA; its binding is stimulated by other ribosomal proteins, e.g. L4, L17, and L20. It is important during the early stages of 50S assembly. It makes multiple contacts with different domains of the 23S rRNA in the assembled 50S subunit and ribosome. Its function is as follows. The globular domain of the protein is located near the polypeptide exit tunnel on the outside of the subunit, while an extended beta-hairpin is found that lines the wall of the exit tunnel in the center of the 70S ribosome. This chain is Large ribosomal subunit protein uL22, found in Solidesulfovibrio magneticus (strain ATCC 700980 / DSM 13731 / RS-1) (Desulfovibrio magneticus).